Reading from the N-terminus, the 98-residue chain is NADH-ubiquinone oxidoreductase chain 4L (98 aa).

A run of 3 helical transmembrane segments spans residues 1 to 21 (MPSISTNIILAFTTALLGVLI), 26 to 46 (LMSSLLCLEGMMLSMFILVSL), and 61 to 81 (IILLVFAACEAAVGLALLVMV).

The protein belongs to the complex I subunit 4L family. Core subunit of respiratory chain NADH dehydrogenase (Complex I) which is composed of 45 different subunits.

The protein resides in the mitochondrion inner membrane. It catalyses the reaction a ubiquinone + NADH + 5 H(+)(in) = a ubiquinol + NAD(+) + 4 H(+)(out). In terms of biological role, core subunit of the mitochondrial membrane respiratory chain NADH dehydrogenase (Complex I) which catalyzes electron transfer from NADH through the respiratory chain, using ubiquinone as an electron acceptor. Part of the enzyme membrane arm which is embedded in the lipid bilayer and involved in proton translocation. This is NADH-ubiquinone oxidoreductase chain 4L (MT-ND4L) from Galago senegalensis (Northern lesser bushbaby).